Consider the following 260-residue polypeptide: Flap endonuclease Xni (260 aa).

Mg(2+) is bound at residue aspartate 104. Positions 160–249 (VSPQQLTDYW…LNGNLQQLRL (90 aa)) constitute a 5'-3' exonuclease domain. K(+) is bound by residues leucine 171, alanine 172, proline 180, valine 182, and isoleucine 185. The interaction with DNA stretch occupies residues 184 to 189 (GIGPKS).

Belongs to the Xni family. The cofactor is Mg(2+). K(+) is required as a cofactor.

In terms of biological role, has flap endonuclease activity. During DNA replication, flap endonucleases cleave the 5'-overhanging flap structure that is generated by displacement synthesis when DNA polymerase encounters the 5'-end of a downstream Okazaki fragment. In Pectobacterium carotovorum subsp. carotovorum (strain PC1), this protein is Flap endonuclease Xni.